An 813-amino-acid chain; its full sequence is Leucine--tRNA ligase (813 aa).

The 'HIGH' region signature appears at 41–51 (PYPSGTLHMGH). Positions 575 to 579 (KMSKS) match the 'KMSKS' region motif. Lysine 578 contacts ATP.

It belongs to the class-I aminoacyl-tRNA synthetase family.

The protein localises to the cytoplasm. It catalyses the reaction tRNA(Leu) + L-leucine + ATP = L-leucyl-tRNA(Leu) + AMP + diphosphate. The polypeptide is Leucine--tRNA ligase (Francisella philomiragia subsp. philomiragia (strain ATCC 25017 / CCUG 19701 / FSC 153 / O#319-036)).